A 418-amino-acid polypeptide reads, in one-letter code: Pyruvate kinase isozyme G, chloroplastic (418 aa).

K(+) is bound by residues D14 and T15. An ATP-binding site is contributed by R21. E165 contacts Mg(2+). The substrate site is built by G188, D189, and T221. Residue D189 participates in Mg(2+) binding.

It belongs to the pyruvate kinase family. The cofactor is Mg(2+). It depends on K(+) as a cofactor. Expressed in developing and germinating endosperm and in roots.

The protein localises to the plastid. It localises to the chloroplast. It carries out the reaction pyruvate + ATP = phosphoenolpyruvate + ADP + H(+). Its pathway is carbohydrate degradation; glycolysis; pyruvate from D-glyceraldehyde 3-phosphate: step 5/5. This chain is Pyruvate kinase isozyme G, chloroplastic, found in Ricinus communis (Castor bean).